The sequence spans 1267 residues: Probable ATP-dependent RNA helicase DHR1 (1267 aa).

Disordered regions lie at residues 1–67, 168–233, and 255–313; these read MGTY…EPLT, YEPK…SNIK, and EELK…DQND. Composition is skewed to basic and acidic residues over residues 7-25 and 32-43; these read RFNE…ELKR and TRQDENDERVEN. Residues 175 to 192 show a composition bias toward acidic residues; it reads EYGEGGSSEDDDGEDDFE. At serine 181 the chain carries Phosphoserine. Residues 202–217 show a composition bias toward basic and acidic residues; the sequence is TDNEEKKSSGFIDHRP. Residues 264 to 284 show a composition bias toward acidic residues; it reads DEMDFDTTSEDDDEEEDQEEE. The region spanning 401–580 is the Helicase ATP-binding domain; sequence MEAIHHNDVV…KTLFPIAPPV (180 aa). Residue 414–421 participates in ATP binding; it reads GETGSGKT. The DEAH box signature appears at 516-519; that stretch reads DEAH. The region spanning 675 to 858 is the Helicase C-terminal domain; that stretch reads DIDFSVQVID…SIVLQMKSMA (184 aa). Disordered regions lie at residues 693–720 and 955–976; these read RYEE…EVLT and PNPD…PGMD. Acidic residues predominate over residues 695-719; sequence EEDEGNSGNGEDEEDEEEEGFEEVL.

The protein belongs to the DEAD box helicase family. DEAH subfamily. Interacts with snoRNA U3. Component of the ribosomal small subunit (SSU) processome composed of at least 40 protein subunits and snoRNA U3.

It is found in the nucleus. Its subcellular location is the nucleolus. The catalysed reaction is ATP + H2O = ADP + phosphate + H(+). Functionally, probable ATP-binding RNA helicase. Required for 18S rRNA synthesis. May play a role in restructuring of the pre-rRNA. This is Probable ATP-dependent RNA helicase DHR1 (ECM16) from Saccharomyces cerevisiae (strain ATCC 204508 / S288c) (Baker's yeast).